An 831-amino-acid chain; its full sequence is Thymine dioxygenase JBP1-B (831 aa).

The thymine dioxygenase stretch occupies residues 80–282; that stretch reads VVGGVLLPGA…RLTCVCYYRA (203 aa). Residues His207, Asp209, and His257 each coordinate Fe cation. Residue Arg273 coordinates 2-oxoglutarate. Positions 409–578 are DNA-binding JBP1 domain; that stretch reads LGGALKAAEE…IEEARRRGNA (170 aa).

This sequence belongs to the TET family. JBP1 subfamily. Monomer. Binds to DNA as a monomer. Fe(2+) is required as a cofactor.

The protein localises to the nucleus. It catalyses the reaction thymine + 2-oxoglutarate + O2 = 5-hydroxymethyluracil + succinate + CO2. Dioxygenase that catalyzes the first step of DNA base J (beta-d-glucosyl-HOMedU) biosynthesis by converting thymine to 5-hydroxymethyluracil (HOMedU). DNA base J is a hypermodified thymidine residue found in the genome of kinetoplastid parasites, which is localized primarily to repetitive DNA, namely the telomeres, and is implicated in the regulation of antigenic variation. Also specifically binds to base J-containing DNA (J-DNA). Involved in propagation and maintenance of DNA base J synthesis initiated by JBP2 by specifically binding already synthesized DNA base J and propagating J synthesis. Thymine dioxygenase activity and J-DNA-binding are independent functions. The chain is Thymine dioxygenase JBP1-B (JBP1B) from Trypanosoma cruzi (strain CL Brener).